The sequence spans 611 residues: Probable potassium transport system protein Kup 1 (611 aa).

The next 12 helical transmembrane spans lie at 6-26 (LMVG…LYTM), 44-64 (MLSL…VAVV), 90-110 (LGVI…GAIT), 129-149 (ISPY…ALQA), 158-178 (LFGP…LFGI), 193-213 (GLSY…AVFL), 237-257 (WYGL…AVVV), 280-300 (LVAL…SGAF), 328-348 (IYIG…TLGF), 354-374 (LAAA…ILMF), 385-405 (LAAS…FVSA), and 410-430 (VLEG…LMMT).

The protein belongs to the HAK/KUP transporter (TC 2.A.72) family.

The protein localises to the cell inner membrane. The enzyme catalyses K(+)(in) + H(+)(in) = K(+)(out) + H(+)(out). Transport of potassium into the cell. Likely operates as a K(+):H(+) symporter. This is Probable potassium transport system protein Kup 1 from Bradyrhizobium sp. (strain BTAi1 / ATCC BAA-1182).